Consider the following 185-residue polypeptide: Dual specificity protein phosphatase 3 (185 aa).

In terms of domain architecture, Tyrosine-protein phosphatase spans 28-179; sequence QPCNEVVPRV…LCQLNDRLAK (152 aa). The active-site Phosphocysteine intermediate is the C124.

This sequence belongs to the protein-tyrosine phosphatase family. Non-receptor class dual specificity subfamily. As to quaternary structure, microtubule inner protein component of sperm flagellar doublet microtubules. Interacts with VRK3; this interaction activates DUSP3 phosphatase activity.

The protein localises to the nucleus. It localises to the cytoplasm. The protein resides in the cytoskeleton. It is found in the flagellum axoneme. It carries out the reaction O-phospho-L-tyrosyl-[protein] + H2O = L-tyrosyl-[protein] + phosphate. The catalysed reaction is O-phospho-L-seryl-[protein] + H2O = L-seryl-[protein] + phosphate. The enzyme catalyses O-phospho-L-threonyl-[protein] + H2O = L-threonyl-[protein] + phosphate. Functionally, shows activity both for tyrosine-protein phosphate and serine-protein phosphate, but displays a strong preference toward phosphotyrosines. Specifically dephosphorylates and inactivates ERK1 and ERK2. The polypeptide is Dual specificity protein phosphatase 3 (Dusp3) (Mus musculus (Mouse)).